A 474-amino-acid chain; its full sequence is Salutaridinol 7-O-acetyltransferase (474 aa).

His163 (proton acceptor) is an active-site residue. Positions 213 to 234 (ERLTSPSGMSEIPFSSTPEDTE) are disordered. The segment covering 214-230 (RLTSPSGMSEIPFSSTP) has biased composition (polar residues). Catalysis depends on Asp416, which acts as the Proton acceptor.

This sequence belongs to the plant acyltransferase family. In terms of tissue distribution, expressed in root, stem, leaf and capsule of the mature plant. Restricted to sieve elements of the phloem adjacent or proximal to laticifers.

The enzyme catalyses (7S)-salutaridinol + acetyl-CoA = (7S)-O-acetylsalutaridinol + CoA. Its pathway is alkaloid biosynthesis; morphine biosynthesis. Its function is as follows. Acetyltransferase involved in biosynthesis of morphinan-type benzylisoquinoline and opiate alkaloids natural products. Catalyzes the conversion of the phenanthrene alkaloid salutaridinol to salutaridinol-7-O-acetate, the immediate precursor of thebaine along the morphine biosynthetic pathway. Conversion of 7-O-acetylsalutaridinol into thebaine is spontaneous. This is Salutaridinol 7-O-acetyltransferase from Papaver somniferum (Opium poppy).